We begin with the raw amino-acid sequence, 115 residues long: Large ribosomal subunit protein P2 (115 aa).

Met1 is subject to N-acetylmethionine. Residues Ser17 and Ser19 each carry the phosphoserine modification. Lys21 carries the post-translational modification N6-acetyllysine; alternate. Residue Lys21 is modified to N6-succinyllysine; alternate. A compositionally biased stretch (low complexity) spans 76–90 (APGSAAPAAGSAPAA). A disordered region spans residues 76-115 (APGSAAPAAGSAPAAAEERKEEKKEESEESDDDMGFGLFD). 2 positions are modified to phosphoserine: Ser79 and Ser86. Basic and acidic residues predominate over residues 91 to 101 (AEERKEEKKEE). A phosphoserine mark is found at Ser102 and Ser105.

This sequence belongs to the eukaryotic ribosomal protein P1/P2 family. As to quaternary structure, heterodimer with RPLP1 at the lateral ribosomal stalk of the large ribosomal subunit.

Functionally, plays an important role in the elongation step of protein synthesis. The polypeptide is Large ribosomal subunit protein P2 (RPLP2) (Equus caballus (Horse)).